The following is a 98-amino-acid chain: Integration host factor subunit alpha (98 aa).

Belongs to the bacterial histone-like protein family. As to quaternary structure, heterodimer of an alpha and a beta chain.

Functionally, this protein is one of the two subunits of integration host factor, a specific DNA-binding protein that functions in genetic recombination as well as in transcriptional and translational control. In Actinobacillus pleuropneumoniae serotype 5b (strain L20), this protein is Integration host factor subunit alpha.